Here is a 102-residue protein sequence, read N- to C-terminus: Small ribosomal subunit protein bS18 (102 aa).

Belongs to the bacterial ribosomal protein bS18 family. As to quaternary structure, part of the 30S ribosomal subunit. Forms a tight heterodimer with protein bS6.

Functionally, binds as a heterodimer with protein bS6 to the central domain of the 16S rRNA, where it helps stabilize the platform of the 30S subunit. This Orientia tsutsugamushi (strain Ikeda) (Rickettsia tsutsugamushi) protein is Small ribosomal subunit protein bS18.